The primary structure comprises 339 residues: DNA-directed RNA polymerase subunit alpha (339 aa).

Residues 1–233 are alpha N-terminal domain (alpha-NTD); that stretch reads MVREEVAGST…DLFLPFLHAE (233 aa). The segment at 264–339 is alpha C-terminal domain (alpha-CTD); that stretch reads KKGIPLNCIF…IDLLKNKLSF (76 aa).

This sequence belongs to the RNA polymerase alpha chain family. In terms of assembly, in plastids the minimal PEP RNA polymerase catalytic core is composed of four subunits: alpha, beta, beta', and beta''. When a (nuclear-encoded) sigma factor is associated with the core the holoenzyme is formed, which can initiate transcription.

The protein resides in the plastid. It is found in the chloroplast. The enzyme catalyses RNA(n) + a ribonucleoside 5'-triphosphate = RNA(n+1) + diphosphate. DNA-dependent RNA polymerase catalyzes the transcription of DNA into RNA using the four ribonucleoside triphosphates as substrates. This is DNA-directed RNA polymerase subunit alpha from Bromus inermis (Smooth brome grass).